The primary structure comprises 1007 residues: Protocadherin alpha-C2 (1007 aa).

The first 42 residues, 1–42, serve as a signal peptide directing secretion; it reads MEQAGTRPAATEHPRLRRPMPWLLLLPLLLLLLLLLPGPAAS. Cadherin domains follow at residues 43–148, 149–257, 258–365, 374–469, and 470–579; these read QLRY…SPRF, PRPN…SPAF, DQST…APEV, VPEN…PPSF, and LEDS…APHI. Over 43 to 708 the chain is Extracellular; the sequence is QLRYSVPEEQ…RTYSEITLYL (666 aa). 2 N-linked (GlcNAc...) asparagine glycosylation sites follow: N280 and N436. N-linked (GlcNAc...) asparagine glycosylation is found at N586 and N657. A Cadherin 6 domain is found at 594–691; the sequence is GPRTAPAGYL…DRVSKILPDT (98 aa). The helical transmembrane segment at 709-729 threads the bilayer; sequence IIALSTVSFIFLLTIIILSII. At 730–1007 the chain is on the cytoplasmic side; sequence KCYRYTAYGT…GNSTTDNSDQ (278 aa). PXXP repeat units lie at residues 856 to 859, 889 to 892, 930 to 933, and 948 to 951; these read PRQP, PGGP, PGNP, and PGSP. The interval 856–951 is 4 X 4 AA repeats of P-X-X-P; sequence PRQPNPDWRY…PDKFIIPGSP (96 aa). The segment at 885 to 1007 is disordered; the sequence is LRAGPGGPDQ…GNSTTDNSDQ (123 aa). The segment covering 966-980 has biased composition (basic and acidic residues); the sequence is DKSDFITFGKKEETK.

Its subcellular location is the cell membrane. Functionally, potential calcium-dependent cell-adhesion protein. May be involved in the establishment and maintenance of specific neuronal connections in the brain. This is Protocadherin alpha-C2 (PCDHAC2) from Pan troglodytes (Chimpanzee).